A 396-amino-acid chain; its full sequence is Tryptophan synthase beta chain (396 aa).

Residue Lys88 is modified to N6-(pyridoxal phosphate)lysine.

Belongs to the TrpB family. As to quaternary structure, tetramer of two alpha and two beta chains. The cofactor is pyridoxal 5'-phosphate.

It carries out the reaction (1S,2R)-1-C-(indol-3-yl)glycerol 3-phosphate + L-serine = D-glyceraldehyde 3-phosphate + L-tryptophan + H2O. It participates in amino-acid biosynthesis; L-tryptophan biosynthesis; L-tryptophan from chorismate: step 5/5. The beta subunit is responsible for the synthesis of L-tryptophan from indole and L-serine. The protein is Tryptophan synthase beta chain of Shewanella putrefaciens (strain CN-32 / ATCC BAA-453).